Here is a 495-residue protein sequence, read N- to C-terminus: 3-octaprenyl-4-hydroxybenzoate carboxy-lyase (495 aa).

Mn(2+) is bound at residue Asn172. Residues Ile175 to Arg177, Arg189 to Leu191, and Arg194 to Gly195 each bind prenylated FMN. Residue Glu238 participates in Mn(2+) binding. The Proton donor role is filled by Asp287.

The protein belongs to the UbiD family. In terms of assembly, homohexamer. Prenylated FMN serves as cofactor. The cofactor is Mn(2+).

The protein resides in the cell membrane. It carries out the reaction a 4-hydroxy-3-(all-trans-polyprenyl)benzoate + H(+) = a 2-(all-trans-polyprenyl)phenol + CO2. Its pathway is cofactor biosynthesis; ubiquinone biosynthesis. In terms of biological role, catalyzes the decarboxylation of 3-octaprenyl-4-hydroxy benzoate to 2-octaprenylphenol, an intermediate step in ubiquinone biosynthesis. The chain is 3-octaprenyl-4-hydroxybenzoate carboxy-lyase from Yersinia pestis bv. Antiqua (strain Angola).